The primary structure comprises 375 residues: Probable aspartate aminotransferase (375 aa).

G31 and N165 together coordinate L-aspartate. N6-(pyridoxal phosphate)lysine is present on K223. Residue R353 participates in L-aspartate binding.

This sequence belongs to the class-I pyridoxal-phosphate-dependent aminotransferase family. In terms of assembly, homodimer. Pyridoxal 5'-phosphate is required as a cofactor.

The protein resides in the cytoplasm. It catalyses the reaction L-aspartate + 2-oxoglutarate = oxaloacetate + L-glutamate. In Methanocaldococcus jannaschii (strain ATCC 43067 / DSM 2661 / JAL-1 / JCM 10045 / NBRC 100440) (Methanococcus jannaschii), this protein is Probable aspartate aminotransferase.